The primary structure comprises 78 residues: Acyl carrier protein (78 aa).

The Carrier domain occupies 2–77; it reads SNFEERVKKI…AAIDYVVSSA (76 aa). O-(pantetheine 4'-phosphoryl)serine is present on Ser37.

This sequence belongs to the acyl carrier protein (ACP) family. In terms of processing, 4'-phosphopantetheine is transferred from CoA to a specific serine of apo-ACP by AcpS. This modification is essential for activity because fatty acids are bound in thioester linkage to the sulfhydryl of the prosthetic group.

Its subcellular location is the cytoplasm. It participates in lipid metabolism; fatty acid biosynthesis. Its function is as follows. Carrier of the growing fatty acid chain in fatty acid biosynthesis. Is probably involved in the biosynthesis of docosahexaenoic acid (DHA) which is produced by this bacterium as a fatty acyl component in its membrane lipid. The sequence is that of Acyl carrier protein from Moritella marina (Vibrio marinus).